The following is a 179-amino-acid chain: MSKQSNKLLHIATIGKSVGLGGDMKLHIKSDFPEQFKKGVSFFINENETLTLSDINHERALIKFVGYNSPEDAKKLTNKNLYTTIERTRKECRLEKDEYFWFDIEGCSVVEDGKVLGIVDELDRMGITNYLCVITDETLVKSGFAKSFLIPFREPFTINTDIKEKIITVIGAMDILEAS.

In terms of domain architecture, PRC barrel spans 96–175; it reads KDEYFWFDIE…IITVIGAMDI (80 aa).

Belongs to the RimM family. As to quaternary structure, binds ribosomal protein uS19.

The protein localises to the cytoplasm. In terms of biological role, an accessory protein needed during the final step in the assembly of 30S ribosomal subunit, possibly for assembly of the head region. Essential for efficient processing of 16S rRNA. May be needed both before and after RbfA during the maturation of 16S rRNA. It has affinity for free ribosomal 30S subunits but not for 70S ribosomes. This chain is Ribosome maturation factor RimM, found in Sulfurimonas denitrificans (strain ATCC 33889 / DSM 1251) (Thiomicrospira denitrificans (strain ATCC 33889 / DSM 1251)).